A 161-amino-acid polypeptide reads, in one-letter code: Large ribosomal subunit protein uL15 (161 aa).

Residues 1 to 43 (MKLSDIADNAGARKKRMRVGRGIGSGKGKTSGRGGKGQTARSG) form a disordered region. The segment covering 21 to 37 (RGIGSGKGKTSGRGGKG) has biased composition (gly residues).

It belongs to the universal ribosomal protein uL15 family. Part of the 50S ribosomal subunit.

In terms of biological role, binds to the 23S rRNA. The chain is Large ribosomal subunit protein uL15 from Bradyrhizobium sp. (strain ORS 278).